An 889-amino-acid chain; its full sequence is DNA mismatch repair protein MutS (889 aa).

ATP is bound at residue Gly620 to Ser627. The disordered stretch occupies residues Ala812–Gly831.

This sequence belongs to the DNA mismatch repair MutS family.

In terms of biological role, this protein is involved in the repair of mismatches in DNA. It is possible that it carries out the mismatch recognition step. This protein has a weak ATPase activity. The polypeptide is DNA mismatch repair protein MutS (Syntrophobacter fumaroxidans (strain DSM 10017 / MPOB)).